A 178-amino-acid polypeptide reads, in one-letter code: Crossover junction endodeoxyribonuclease RuvC (178 aa).

Residues aspartate 7, glutamate 67, and aspartate 139 contribute to the active site. Aspartate 7, glutamate 67, and aspartate 139 together coordinate Mg(2+).

This sequence belongs to the RuvC family. Homodimer which binds Holliday junction (HJ) DNA. The HJ becomes 2-fold symmetrical on binding to RuvC with unstacked arms; it has a different conformation from HJ DNA in complex with RuvA. In the full resolvosome a probable DNA-RuvA(4)-RuvB(12)-RuvC(2) complex forms which resolves the HJ. Requires Mg(2+) as cofactor.

Its subcellular location is the cytoplasm. The enzyme catalyses Endonucleolytic cleavage at a junction such as a reciprocal single-stranded crossover between two homologous DNA duplexes (Holliday junction).. The RuvA-RuvB-RuvC complex processes Holliday junction (HJ) DNA during genetic recombination and DNA repair. Endonuclease that resolves HJ intermediates. Cleaves cruciform DNA by making single-stranded nicks across the HJ at symmetrical positions within the homologous arms, yielding a 5'-phosphate and a 3'-hydroxyl group; requires a central core of homology in the junction. The consensus cleavage sequence is 5'-(A/T)TT(C/G)-3'. Cleavage occurs on the 3'-side of the TT dinucleotide at the point of strand exchange. HJ branch migration catalyzed by RuvA-RuvB allows RuvC to scan DNA until it finds its consensus sequence, where it cleaves and resolves the cruciform DNA. The polypeptide is Crossover junction endodeoxyribonuclease RuvC (Trichlorobacter lovleyi (strain ATCC BAA-1151 / DSM 17278 / SZ) (Geobacter lovleyi)).